Consider the following 445-residue polypeptide: METSKSSTMQVSFVCQRCSQPLKLDTSFKILDKVTMQELTAPLVTTAAVKPGDIQEVDSNIEETFAENRTDGVSRRLIPPARMMSTESATSFTLIGEASDGGTMENLSRRLKVTGDLFDIMSGQTDVDHPLCEECTDTLLDQLDTQLNITENECQNYKRCLEILERMNEDDKEKLEAKLKELAEDEERLIQELEEVERNRELVAKDIEKVREEAERLEQEEARYQKEYSEFKRQQLELDDDLKSVENQMRYAQIQLDKLKKTNVFNATFHIWHSGQFGTINNFRLGRLPSVPVEWNEINAAWGQTVLLLHALANKMGLQFQRYRLVPFGNHSYLESLTDKSKELPLYCSGGLRFFWDNKFDHAMVAFLDCVQQFKEEVEKGDTGFCLPYRMDVDKGKIEDTGGSGGSYSIKTQFNSEEQWTKALKFMLTNLKWGLAWVSSQFYNK.

Residues 103 to 122 (TMENLSRRLKVTGDLFDIMS) carry the BH3 motif. A coiled-coil region spans residues 137-264 (DTLLDQLDTQ…QLDKLKKTNV (128 aa)). The segment at 240–445 (DDLKSVENQM…AWVSSQFYNK (206 aa)) is evolutionary conserved domain (ECD). The interval 420-445 (WTKALKFMLTNLKWGLAWVSSQFYNK) is required for membrane-association.

It belongs to the beclin family. Component of the PI3K (PI3KC3/PI3K-III/class III phosphatidylinositol 3-kinase) complex. May be proteolytically processed by caspases; the C-terminal fragment(s) may induce apoptosis.

It is found in the cytoplasm. It localises to the golgi apparatus. The protein resides in the trans-Golgi network membrane. Its subcellular location is the endosome membrane. The protein localises to the endoplasmic reticulum membrane. It is found in the mitochondrion membrane. It localises to the cytoplasmic vesicle. The protein resides in the autophagosome. In terms of biological role, plays a central role in autophagy. Acts as core subunit of different PI3K complex forms that mediate formation of phosphatidylinositol 3-phosphate and are believed to play a role in multiple membrane trafficking pathways: PI3KC3-C1 is involved in initiation of autophagosomes and PI3KC3-C2 in maturation of autophagosomes and endocytosis. Involved in regulation of degradative endocytic trafficking and required for the abscission step in cytokinesis, probably in the context of PI3KC3-C2. Essential for the formation of PI3KC3-C2 but not PI3KC3-C1 PI3K complex forms. Involved in endocytosis including endosome formation in neuronal cells. The polypeptide is Beclin-1 (becn1) (Xenopus laevis (African clawed frog)).